We begin with the raw amino-acid sequence, 243 residues long: Protein HUA2 (243 aa).

The protein resides in the cytoplasm. May have a role in actin patch assembly. The protein is Protein HUA2 (HUA2) of Saccharomyces cerevisiae (strain ATCC 204508 / S288c) (Baker's yeast).